The chain runs to 459 residues: Sensor histidine kinase SpaK (459 aa).

Residues 1–18 (MGIGFKGRKTLLRELVKY) lie on the Cytoplasmic side of the membrane. A helical transmembrane segment spans residues 19–39 (MVTLCISLVVLALLYIFINTI). At 40-155 (AMNTGFSHPA…RKYLPNYELT (116 aa)) the chain is on the extracellular side. A helical transmembrane segment spans residues 156–176 (SICILIILLIIVISIITTYFA). Over 177 to 459 (NRLRKHFETL…VRVKIPLRNE (283 aa)) the chain is Cytoplasmic. Positions 244-458 (ALAHEIKIPI…EVRVKIPLRN (215 aa)) constitute a Histidine kinase domain. His247 is subject to Phosphohistidine; by autocatalysis.

It localises to the cell membrane. It carries out the reaction ATP + protein L-histidine = ADP + protein N-phospho-L-histidine.. In terms of biological role, member of the two-component regulatory system SpaK/SpaR involved in the regulation of the biosynthesis of lantibiotic subtilin. SpaK may function as a membrane-associated protein kinase that phosphorylates SpaR in response to environmental signals. The chain is Sensor histidine kinase SpaK (spaK) from Bacillus subtilis.